The chain runs to 419 residues: UDP-N-acetylglucosamine 1-carboxyvinyltransferase (419 aa).

22-23 (KN) lines the phosphoenolpyruvate pocket. Position 91 (arginine 91) interacts with UDP-N-acetyl-alpha-D-glucosamine. Cysteine 115 functions as the Proton donor in the catalytic mechanism. A 2-(S-cysteinyl)pyruvic acid O-phosphothioketal modification is found at cysteine 115. UDP-N-acetyl-alpha-D-glucosamine contacts are provided by residues 120–124 (RPVDL), 160–163 (KVSV), aspartate 305, and valine 327.

This sequence belongs to the EPSP synthase family. MurA subfamily.

It is found in the cytoplasm. It catalyses the reaction phosphoenolpyruvate + UDP-N-acetyl-alpha-D-glucosamine = UDP-N-acetyl-3-O-(1-carboxyvinyl)-alpha-D-glucosamine + phosphate. The protein operates within cell wall biogenesis; peptidoglycan biosynthesis. Its function is as follows. Cell wall formation. Adds enolpyruvyl to UDP-N-acetylglucosamine. The sequence is that of UDP-N-acetylglucosamine 1-carboxyvinyltransferase from Escherichia coli (strain K12 / MC4100 / BW2952).